The following is a 353-amino-acid chain: Ferrochelatase (353 aa).

His-223 and Glu-304 together coordinate Fe cation.

The protein belongs to the ferrochelatase family.

It is found in the cytoplasm. It carries out the reaction heme b + 2 H(+) = protoporphyrin IX + Fe(2+). It participates in porphyrin-containing compound metabolism; protoheme biosynthesis; protoheme from protoporphyrin-IX: step 1/1. Catalyzes the ferrous insertion into protoporphyrin IX. This chain is Ferrochelatase, found in Mesorhizobium japonicum (strain LMG 29417 / CECT 9101 / MAFF 303099) (Mesorhizobium loti (strain MAFF 303099)).